Here is a 1088-residue protein sequence, read N- to C-terminus: DNA-directed RNA polymerase subunit beta (1088 aa).

It belongs to the RNA polymerase beta chain family. In plastids the minimal PEP RNA polymerase catalytic core is composed of four subunits: alpha, beta, beta', and beta''. When a (nuclear-encoded) sigma factor is associated with the core the holoenzyme is formed, which can initiate transcription.

The protein resides in the plastid. The protein localises to the chloroplast. The enzyme catalyses RNA(n) + a ribonucleoside 5'-triphosphate = RNA(n+1) + diphosphate. DNA-dependent RNA polymerase catalyzes the transcription of DNA into RNA using the four ribonucleoside triphosphates as substrates. This chain is DNA-directed RNA polymerase subunit beta, found in Ostreococcus tauri.